A 120-amino-acid chain; its full sequence is Alpha-amylase inhibitor Haim-2 (120 aa).

A signal peptide spans 1–32; the sequence is MKRYVCSTFVACVMVLCVIPASGAAAHEAVAE. Intrachain disulfides connect cysteine 43-cysteine 59 and cysteine 77-cysteine 104.

In terms of biological role, inhibits mammalian alpha-amylases specifically but has no action on plant and microbial alpha-amylases. This chain is Alpha-amylase inhibitor Haim-2, found in Streptomyces griseosporeus.